A 219-amino-acid polypeptide reads, in one-letter code: Probable GTP-binding protein EngB (219 aa).

The region spanning 42-219 (SVPEIAFAGR…RTAVLEAVEL (178 aa)) is the EngB-type G domain. GTP is bound by residues 50 to 57 (GRSNVGKS), 77 to 81 (GRTQE), 97 to 100 (DMPG), 164 to 167 (TKAD), and 198 to 200 (TSS). Mg(2+)-binding residues include Ser57 and Thr79.

This sequence belongs to the TRAFAC class TrmE-Era-EngA-EngB-Septin-like GTPase superfamily. EngB GTPase family. Requires Mg(2+) as cofactor.

Functionally, necessary for normal cell division and for the maintenance of normal septation. This chain is Probable GTP-binding protein EngB, found in Sphingopyxis alaskensis (strain DSM 13593 / LMG 18877 / RB2256) (Sphingomonas alaskensis).